The chain runs to 165 residues: Interferon gamma (165 aa).

The first 23 residues, 1–23 (MKYTSYILAFQLCIVLGSLGCYC), serve as a signal peptide directing secretion. Pyrrolidone carboxylic acid is present on Gln24. Residues Asn48 and Asn120 are each glycosylated (N-linked (GlcNAc...) asparagine).

It belongs to the type II (or gamma) interferon family. In terms of assembly, homodimer. Interacts with IFNGR1 (via extracellular domain); this interaction promotes IFNGR1 dimerization.

Its subcellular location is the secreted. Functionally, type II interferon produced by immune cells such as T-cells and NK cells that plays crucial roles in antimicrobial, antiviral, and antitumor responses by activating effector immune cells and enhancing antigen presentation. Primarily signals through the JAK-STAT pathway after interaction with its receptor IFNGR1 to affect gene regulation. Upon IFNG binding, IFNGR1 intracellular domain opens out to allow association of downstream signaling components JAK2, JAK1 and STAT1, leading to STAT1 activation, nuclear translocation and transcription of IFNG-regulated genes. Many of the induced genes are transcription factors such as IRF1 that are able to further drive regulation of a next wave of transcription. Plays a role in class I antigen presentation pathway by inducing a replacement of catalytic proteasome subunits with immunoproteasome subunits. In turn, increases the quantity, quality, and repertoire of peptides for class I MHC loading. Increases the efficiency of peptide generation also by inducing the expression of activator PA28 that associates with the proteasome and alters its proteolytic cleavage preference. Up-regulates as well MHC II complexes on the cell surface by promoting expression of several key molecules such as cathepsins B/CTSB, H/CTSH, and L/CTSL. Participates in the regulation of hematopoietic stem cells during development and under homeostatic conditions by affecting their development, quiescence, and differentiation. The chain is Interferon gamma (IFNG) from Papio anubis (Olive baboon).